A 421-amino-acid polypeptide reads, in one-letter code: Phosphoribosylamine--glycine ligase (421 aa).

The ATP-grasp domain maps to 108–314 (KEIMVKYNVP…FAQNIDDIMM (207 aa)). Residue 134-195 (IEEQGAPIVV…EEFLDGEEFS (62 aa)) coordinates ATP. Mg(2+) contacts are provided by Glu284 and Asn286.

The protein belongs to the GARS family. It depends on Mg(2+) as a cofactor. Mn(2+) is required as a cofactor.

The catalysed reaction is 5-phospho-beta-D-ribosylamine + glycine + ATP = N(1)-(5-phospho-beta-D-ribosyl)glycinamide + ADP + phosphate + H(+). It participates in purine metabolism; IMP biosynthesis via de novo pathway; N(1)-(5-phospho-D-ribosyl)glycinamide from 5-phospho-alpha-D-ribose 1-diphosphate: step 2/2. This is Phosphoribosylamine--glycine ligase from Streptococcus pyogenes serotype M1.